The sequence spans 103 residues: V-type sodium ATPase subunit G (103 aa).

The protein belongs to the V-ATPase F subunit family.

In terms of biological role, involved in ATP-driven sodium extrusion. The protein is V-type sodium ATPase subunit G (ntpG) of Enterococcus hirae (strain ATCC 9790 / DSM 20160 / JCM 8729 / LMG 6399 / NBRC 3181 / NCIMB 6459 / NCDO 1258 / NCTC 12367 / WDCM 00089 / R).